We begin with the raw amino-acid sequence, 132 residues long: C-glycoside deglycosidase beta subunit (132 aa).

Belongs to the C-glycoside deglycosidase beta subunit family. As to quaternary structure, heterodimer composed of an alpha subunit (CarB2) and a beta subunit (CarC2). A divalent metal cation is required as a cofactor.

The enzyme catalyses 3''-dehydroorientin = 1,5-anhydro-D-erythro-hex-1-en-3-ulose + luteolin. Activity is strongly reduced in the presence of chelating agents. Carbon-carbon bond-cleaving enzyme which participates in the metabolism of C-glycosides. Acts on the C8-glycosylated compound 3''-dehydroorientin (3''-oxo-orientin). The sequence is that of C-glycoside deglycosidase beta subunit from Arthrobacter globiformis (strain ATCC 8010 / DSM 20124 / JCM 1332 / NBRC 12137 / NCIMB 8907 / NRRL B-2979 / 168).